The primary structure comprises 597 residues: Bile salt-activated lipase (597 aa).

A signal peptide spans 1 to 18; it reads LGASRLGPSPGCLAVASA. Cysteines 82 and 98 form a disulfide. An N-linked (GlcNAc...) asparagine glycan is attached at asparagine 205. The active-site Acyl-ester intermediate is serine 212. A disulfide bond links cysteine 264 and cysteine 275. Residue aspartate 338 is the Charge relay system of the active site. Asparagine 379 is a glycosylation site (N-linked (GlcNAc...) asparagine). The Charge relay system role is filled by histidine 453. The interval 553–591 is disordered; the sequence is AGASLLPPEDNSQASPVPPADNSGAPTEPSAGDSEVAQM.

This sequence belongs to the type-B carboxylesterase/lipase family. Interacts with CLC.

The protein localises to the secreted. It catalyses the reaction a triacylglycerol + H2O = a diacylglycerol + a fatty acid + H(+). The catalysed reaction is 1,2,3-tri-(9Z-octadecenoyl)-glycerol + H2O = di-(9Z)-octadecenoylglycerol + (9Z)-octadecenoate + H(+). The enzyme catalyses 1,2,3-trioctanoylglycerol + H2O = dioctanoylglycerol + octanoate + H(+). It carries out the reaction a sterol ester + H2O = a sterol + a fatty acid + H(+). It catalyses the reaction cholesteryl (9Z-octadecenoate) + H2O = cholesterol + (9Z)-octadecenoate + H(+). The catalysed reaction is an acetyl ester + H2O = an aliphatic alcohol + acetate + H(+). The enzyme catalyses a butanoate ester + H2O = an aliphatic alcohol + butanoate + H(+). It carries out the reaction 9-hexadecanoyloxy-octadecanoate + H2O = 9-hydroxy-octadecanoate + hexadecanoate + H(+). It catalyses the reaction 9-(9Z-octadecenoyloxy)-octadecanoate + H2O = 9-hydroxy-octadecanoate + (9Z)-octadecenoate + H(+). The catalysed reaction is 1-hexadecanoyl-sn-glycero-3-phosphocholine + H2O = sn-glycerol 3-phosphocholine + hexadecanoate + H(+). The enzyme catalyses 12-hexadecanoyloxy-octadecanoate + H2O = 12-hydroxyoctadecanoate + hexadecanoate + H(+). It carries out the reaction 12-(9Z-octadecenoyloxy)-octadecanoate + H2O = 12-hydroxyoctadecanoate + (9Z)-octadecenoate + H(+). It catalyses the reaction 13-(9Z-octadecenoyloxy)-octadecanoate + H2O = 13-hydroxy-octadecanoate + (9Z)-octadecenoate + H(+). The catalysed reaction is 9-(9Z-hexadecenoyloxy)-octadecanoate + H2O = (9Z)-hexadecenoate + 9-hydroxy-octadecanoate + H(+). The enzyme catalyses 12-(9Z-hexadecenoyloxy)-octadecanoate + H2O = 12-hydroxyoctadecanoate + (9Z)-hexadecenoate + H(+). It carries out the reaction 13-(9Z-hexadecenoyloxy)-octadecanoate + H2O = 13-hydroxy-octadecanoate + (9Z)-hexadecenoate + H(+). It catalyses the reaction 12-octadecanoyloxy-octadecanoate + H2O = 12-hydroxyoctadecanoate + octadecanoate + H(+). The catalysed reaction is 13-octadecanoyloxy-octadecanoate + H2O = 13-hydroxy-octadecanoate + octadecanoate + H(+). The enzyme catalyses 5-(9Z-hexadecenoyloxy)-octadecanoate + H2O = 5-hydroxy-octadecanoate + (9Z)-hexadecenoate + H(+). It carries out the reaction 9-octadecanoyloxy-octadecanoate + H2O = 9-hydroxy-octadecanoate + octadecanoate + H(+). Its activity is regulated as follows. Activated by bile salts such as sodium taurocholate. In terms of biological role, catalyzes the hydrolysis of a wide range of substrates including cholesteryl esters, phospholipids, lysophospholipids, di- and tri-acylglycerols, and fatty acid esters of hydroxy fatty acids (FAHFA). Preferentially hydrolyzes FAHFAs with the ester bond further away from the carboxylate. Unsaturated FAHFAs are hydrolyzed more quickly than saturated FAHFAs. Has an essential role in the complete digestion of dietary lipids and their intestinal absorption, along with the absorption of fat-soluble vitamins. The polypeptide is Bile salt-activated lipase (CEL) (Bos taurus (Bovine)).